Consider the following 274-residue polypeptide: Penicillin-insensitive murein endopeptidase (274 aa).

Residues 1–19 (MKKTAIALLAWFVSSASLA) form the signal peptide. 3 disulfides stabilise this stretch: Cys44–Cys265, Cys187–Cys235, and Cys216–Cys223. His110, His113, Asp120, Asp147, His150, and His211 together coordinate Zn(2+). A disordered region spans residues 225–274 (DQPLPPPGDGCGAELQSWFEPPKPGTTKPEKKTPPPLPPSCQALLDEHVL).

Belongs to the peptidase M74 family. In terms of assembly, dimer. Zn(2+) serves as cofactor.

The protein localises to the periplasm. Its function is as follows. Murein endopeptidase that cleaves the D-alanyl-meso-2,6-diamino-pimelyl amide bond that connects peptidoglycan strands. Likely plays a role in the removal of murein from the sacculus. In Salmonella choleraesuis (strain SC-B67), this protein is Penicillin-insensitive murein endopeptidase.